Consider the following 149-residue polypeptide: SsrA-binding protein (149 aa).

The protein belongs to the SmpB family.

It localises to the cytoplasm. Its function is as follows. Required for rescue of stalled ribosomes mediated by trans-translation. Binds to transfer-messenger RNA (tmRNA), required for stable association of tmRNA with ribosomes. tmRNA and SmpB together mimic tRNA shape, replacing the anticodon stem-loop with SmpB. tmRNA is encoded by the ssrA gene; the 2 termini fold to resemble tRNA(Ala) and it encodes a 'tag peptide', a short internal open reading frame. During trans-translation Ala-aminoacylated tmRNA acts like a tRNA, entering the A-site of stalled ribosomes, displacing the stalled mRNA. The ribosome then switches to translate the ORF on the tmRNA; the nascent peptide is terminated with the 'tag peptide' encoded by the tmRNA and targeted for degradation. The ribosome is freed to recommence translation, which seems to be the essential function of trans-translation. The polypeptide is SsrA-binding protein (Carboxydothermus hydrogenoformans (strain ATCC BAA-161 / DSM 6008 / Z-2901)).